A 156-amino-acid polypeptide reads, in one-letter code: Hydrogenase 3 maturation protease (156 aa).

3 residues coordinate Ni(2+): Asp16, Asp62, and His90.

This sequence belongs to the peptidase A31 family. Monomer.

It carries out the reaction This enzyme specifically removes a 32-amino acid peptide from the C-terminus of the precursor of the large subunit of E.coli hydrogenase 3 by cleavage at the C-terminal side of Arg-537.. Protease involved in the C-terminal processing of HycE, the large subunit of hydrogenase 3. In Escherichia coli O157:H7, this protein is Hydrogenase 3 maturation protease (hycI).